The following is a 295-amino-acid chain: UTP--glucose-1-phosphate uridylyltransferase (295 aa).

It belongs to the UDPGP type 2 family.

The catalysed reaction is alpha-D-glucose 1-phosphate + UTP + H(+) = UDP-alpha-D-glucose + diphosphate. In terms of biological role, may play a role in stationary phase survival. This Haemophilus influenzae (strain ATCC 51907 / DSM 11121 / KW20 / Rd) protein is UTP--glucose-1-phosphate uridylyltransferase (galU).